The following is a 460-amino-acid chain: Protein unc-93 homolog A (460 aa).

5 helical membrane passes run 7-27 (ILIVSFGFLLLFTAFGGLQSL), 41-61 (SLSVIYAALIVSSVFVPPIVI), 68-88 (WTIVASMCCYITYSLGNFYAS), 89-109 (WYTLIPTSLILGFGGAPLWAA), and 139-159 (LFFLIFQSSGVWGNLISSLIF). 2 N-linked (GlcNAc...) asparagine glycosylation sites follow: Asn-168 and Asn-189. The next 6 membrane-spanning stretches (helical) occupy residues 203–223 (TLLGVYTGSGVLAVILIAVFL), 292–312 (FVGYVMICFAATNAVCSLLFG), 321–341 (ICLFILAAVSNAACVIALLLW), 345–365 (PNDFAVFFIFPAIWGMADAIW), 390–410 (LWESLGFVIAYGYSTFLCVSV), and 412–432 (LYILLAVLLIAIVFYGFVEYL).

Belongs to the unc-93 family.

Its subcellular location is the membrane. The sequence is that of Protein unc-93 homolog A (unc93a) from Xenopus laevis (African clawed frog).